The sequence spans 294 residues: N-acetylmuramic acid 6-phosphate etherase (294 aa).

Residues 54-217 (VIKSFEEEGR…STASMIGVGK (164 aa)) form the SIS domain. Residue Glu-82 is the Proton donor of the active site. Glu-113 is an active-site residue.

This sequence belongs to the GCKR-like family. MurNAc-6-P etherase subfamily. In terms of assembly, homodimer.

It carries out the reaction N-acetyl-D-muramate 6-phosphate + H2O = N-acetyl-D-glucosamine 6-phosphate + (R)-lactate. Its pathway is amino-sugar metabolism; N-acetylmuramate degradation. Its function is as follows. Specifically catalyzes the cleavage of the D-lactyl ether substituent of MurNAc 6-phosphate, producing GlcNAc 6-phosphate and D-lactate. This is N-acetylmuramic acid 6-phosphate etherase from Bacillus cereus (strain AH187).